A 370-amino-acid chain; its full sequence is (5-formylfuran-3-yl)methyl phosphate transaminase (370 aa).

An N6-(pyridoxal phosphate)lysine modification is found at lysine 222.

Belongs to the class-I pyridoxal-phosphate-dependent aminotransferase family. Homodimer. Requires pyridoxal 5'-phosphate as cofactor.

It is found in the cytoplasm. It catalyses the reaction 4-(hydroxymethyl)-2-furancarboxaldehyde phosphate + L-alanine = [5-(aminomethyl)-3-furyl]methyl phosphate + pyruvate. Its pathway is cofactor biosynthesis; methanofuran biosynthesis. Functionally, catalyzes the transamination reaction between 4-(hydroxymethyl)-2-furancarboxaldehyde phosphate (4-HFC-P) and alanine to produce pyruvate and 5-(aminomethyl)-3-furanmethanol phosphate (F1-P), the precursor for the furan moiety in methanofuran. The polypeptide is (5-formylfuran-3-yl)methyl phosphate transaminase (Methanocaldococcus jannaschii (strain ATCC 43067 / DSM 2661 / JAL-1 / JCM 10045 / NBRC 100440) (Methanococcus jannaschii)).